Reading from the N-terminus, the 501-residue chain is UDP-N-acetylmuramoyl-L-alanyl-D-glutamate--2,6-diaminopimelate ligase (501 aa).

Ser29 is a UDP-N-acetyl-alpha-D-muramoyl-L-alanyl-D-glutamate binding site. 112 to 118 (GTNGKTS) is a binding site for ATP. Residues 161-162 (TT), Ser188, and Arg196 each bind UDP-N-acetyl-alpha-D-muramoyl-L-alanyl-D-glutamate. Lys228 carries the N6-carboxylysine modification. Meso-2,6-diaminopimelate-binding positions include Arg393, 417 to 420 (DNPR), Gly468, and Glu472. Residues 417–420 (DNPR) carry the Meso-diaminopimelate recognition motif motif.

It belongs to the MurCDEF family. MurE subfamily. The cofactor is Mg(2+). Post-translationally, carboxylation is probably crucial for Mg(2+) binding and, consequently, for the gamma-phosphate positioning of ATP.

Its subcellular location is the cytoplasm. It catalyses the reaction UDP-N-acetyl-alpha-D-muramoyl-L-alanyl-D-glutamate + meso-2,6-diaminopimelate + ATP = UDP-N-acetyl-alpha-D-muramoyl-L-alanyl-gamma-D-glutamyl-meso-2,6-diaminopimelate + ADP + phosphate + H(+). It participates in cell wall biogenesis; peptidoglycan biosynthesis. Catalyzes the addition of meso-diaminopimelic acid to the nucleotide precursor UDP-N-acetylmuramoyl-L-alanyl-D-glutamate (UMAG) in the biosynthesis of bacterial cell-wall peptidoglycan. The protein is UDP-N-acetylmuramoyl-L-alanyl-D-glutamate--2,6-diaminopimelate ligase of Acidovorax sp. (strain JS42).